The sequence spans 536 residues: Phosphoenolpyruvate carboxykinase (ATP) (536 aa).

3 residues coordinate substrate: arginine 61, tyrosine 195, and lysine 201. ATP contacts are provided by residues lysine 201, histidine 220, and 236–244 (GLSGTGKTT). Positions 201 and 220 each coordinate Mn(2+). Aspartate 257 contacts Mn(2+). The ATP site is built by glutamate 285, arginine 322, and threonine 447. Arginine 322 contributes to the substrate binding site.

Belongs to the phosphoenolpyruvate carboxykinase (ATP) family. It depends on Mn(2+) as a cofactor.

It localises to the cytoplasm. The enzyme catalyses oxaloacetate + ATP = phosphoenolpyruvate + ADP + CO2. Its pathway is carbohydrate biosynthesis; gluconeogenesis. Functionally, involved in the gluconeogenesis. Catalyzes the conversion of oxaloacetate (OAA) to phosphoenolpyruvate (PEP) through direct phosphoryl transfer between the nucleoside triphosphate and OAA. This Allorhizobium ampelinum (strain ATCC BAA-846 / DSM 112012 / S4) (Agrobacterium vitis (strain S4)) protein is Phosphoenolpyruvate carboxykinase (ATP).